The sequence spans 521 residues: Protein nucleotidyltransferase YdiU (521 aa).

Residues Gly109, Gly111, Arg112, Lys131, Asp143, Gly144, Arg194, and Arg201 each coordinate ATP. Catalysis depends on Asp270, which acts as the Proton acceptor. Mg(2+)-binding residues include Asn271 and Asp280. ATP is bound at residue Asp280.

Belongs to the SELO family. Mg(2+) is required as a cofactor. It depends on Mn(2+) as a cofactor.

It carries out the reaction L-seryl-[protein] + ATP = 3-O-(5'-adenylyl)-L-seryl-[protein] + diphosphate. The catalysed reaction is L-threonyl-[protein] + ATP = 3-O-(5'-adenylyl)-L-threonyl-[protein] + diphosphate. It catalyses the reaction L-tyrosyl-[protein] + ATP = O-(5'-adenylyl)-L-tyrosyl-[protein] + diphosphate. The enzyme catalyses L-histidyl-[protein] + UTP = N(tele)-(5'-uridylyl)-L-histidyl-[protein] + diphosphate. It carries out the reaction L-seryl-[protein] + UTP = O-(5'-uridylyl)-L-seryl-[protein] + diphosphate. The catalysed reaction is L-tyrosyl-[protein] + UTP = O-(5'-uridylyl)-L-tyrosyl-[protein] + diphosphate. In terms of biological role, nucleotidyltransferase involved in the post-translational modification of proteins. It can catalyze the addition of adenosine monophosphate (AMP) or uridine monophosphate (UMP) to a protein, resulting in modifications known as AMPylation and UMPylation. The sequence is that of Protein nucleotidyltransferase YdiU from Burkholderia pseudomallei (strain 1106a).